A 262-amino-acid polypeptide reads, in one-letter code: GTP cyclohydrolase 1 type 2 homolog (262 aa).

A divalent metal cation contacts are provided by His-65, Asp-102, His-222, and Glu-225.

The protein belongs to the GTP cyclohydrolase I type 2/NIF3 family. In terms of assembly, homohexamer.

The chain is GTP cyclohydrolase 1 type 2 homolog from Streptococcus pyogenes serotype M6 (strain ATCC BAA-946 / MGAS10394).